Here is a 148-residue protein sequence, read N- to C-terminus: D-aminoacyl-tRNA deacylase (148 aa).

The Gly-cisPro motif, important for rejection of L-amino acids motif lies at 137–138 (GP).

Belongs to the DTD family. Homodimer.

The protein localises to the cytoplasm. The catalysed reaction is glycyl-tRNA(Ala) + H2O = tRNA(Ala) + glycine + H(+). The enzyme catalyses a D-aminoacyl-tRNA + H2O = a tRNA + a D-alpha-amino acid + H(+). In terms of biological role, an aminoacyl-tRNA editing enzyme that deacylates mischarged D-aminoacyl-tRNAs. Also deacylates mischarged glycyl-tRNA(Ala), protecting cells against glycine mischarging by AlaRS. Acts via tRNA-based rather than protein-based catalysis; rejects L-amino acids rather than detecting D-amino acids in the active site. By recycling D-aminoacyl-tRNA to D-amino acids and free tRNA molecules, this enzyme counteracts the toxicity associated with the formation of D-aminoacyl-tRNA entities in vivo and helps enforce protein L-homochirality. The sequence is that of D-aminoacyl-tRNA deacylase from Ligilactobacillus salivarius (strain UCC118) (Lactobacillus salivarius).